A 218-amino-acid polypeptide reads, in one-letter code: Hypoxanthine-guanine phosphoribosyltransferase (218 aa).

Ala-2 is modified (N-acetylalanine). Lys-69 contacts GMP. Residue Lys-103 is modified to N6-acetyllysine. Lys-115 participates in a covalent cross-link: Glycyl lysine isopeptide (Lys-Gly) (interchain with G-Cter in SUMO1); alternate. Lys-115 is covalently cross-linked (Glycyl lysine isopeptide (Lys-Gly) (interchain with G-Cter in SUMO2); alternate). GMP-binding positions include 134–142 (EDIIDTGKT), Lys-166, 186–188 (KFV), and Asp-194. The active-site Proton acceptor is Asp-138. At Thr-142 the chain carries Phosphothreonine. Mg(2+) is bound at residue Asp-194.

The protein belongs to the purine/pyrimidine phosphoribosyltransferase family. As to quaternary structure, homotetramer. Mg(2+) is required as a cofactor.

It is found in the cytoplasm. It catalyses the reaction IMP + diphosphate = hypoxanthine + 5-phospho-alpha-D-ribose 1-diphosphate. The catalysed reaction is GMP + diphosphate = guanine + 5-phospho-alpha-D-ribose 1-diphosphate. It functions in the pathway purine metabolism; IMP biosynthesis via salvage pathway; IMP from hypoxanthine: step 1/1. Its function is as follows. Converts guanine to guanosine monophosphate, and hypoxanthine to inosine monophosphate. Transfers the 5-phosphoribosyl group from 5-phosphoribosylpyrophosphate onto the purine. Plays a central role in the generation of purine nucleotides through the purine salvage pathway. The protein is Hypoxanthine-guanine phosphoribosyltransferase (HPRT1) of Homo sapiens (Human).